Here is a 440-residue protein sequence, read N- to C-terminus: Trigger factor (440 aa).

The PPIase FKBP-type domain maps to 161–257; the sequence is GDYVKLAYEG…VLEVRERVLP (97 aa).

The protein belongs to the FKBP-type PPIase family. Tig subfamily.

It is found in the cytoplasm. It carries out the reaction [protein]-peptidylproline (omega=180) = [protein]-peptidylproline (omega=0). Its function is as follows. Involved in protein export. Acts as a chaperone by maintaining the newly synthesized protein in an open conformation. Functions as a peptidyl-prolyl cis-trans isomerase. This Opitutus terrae (strain DSM 11246 / JCM 15787 / PB90-1) protein is Trigger factor.